The following is a 559-amino-acid chain: METSKEFEFRPAKETSRSKSPGGIVGRLSNFARNKARHSLSEKGSNSVGGSGGSGFDKPRKDLLKEFHKCKEAQDQRLDLSSIEITSIPSPIKELTQLTELFLYKNKLTCLPTEIGQLVNLKKLGLSENALSSLPDSLSSLESLETLDLRHNKLTEVPAVIYKITSLETLWLRYNRIVAVDEQIGNLQKLKMLDVRENKIRELPSAIGKLSSLVVCLVSYNHLTRVPEEIGECHALTQLDLQHNDLSELPYSIGKLTNLVRIGIRYNKIRCIPSELESCQQLEEFIVESNHLQLLPPNLLTMLPKIHTVNLSRNELTAFPAGGPQQFVPTVTINMEHNQISKIPIGIFSKATRLTKLNLKENELVSLPLDMGSWTSITELNLSTNQLKVLPEDIEKLVNLEILVLSNNQLKKLPNQIGNLKKLRELDLEENELETVPTEIGFLQHLTKLWVQSNKIVTLPRSIGNLCSLQDLRLGENNLTAIPEEIGHLDSLKSLYLNDNSSLHNLPFELALCQSLEIMSIENSPLSQIPPEITAGGPSLVIQYLKMQGPYRGVVMTGQ.

Residues 1–17 (METSKEFEFRPAKETSR) are compositionally biased toward basic and acidic residues. Residues 1–55 (METSKEFEFRPAKETSRSKSPGGIVGRLSNFARNKARHSLSEKGSNSVGGSGGSG) are disordered. 20 LRR repeats span residues 74 to 95 (QDQR…IKEL), 97 to 118 (QLTE…IGQL), 120 to 141 (NLKK…LSSL), 143 to 164 (SLET…IYKI), 166 to 187 (SLET…IGNL), 189 to 210 (KLKM…IGKL), 212 to 233 (SLVV…IGEC), 235 to 257 (ALTQ…GKLT), 258 to 279 (NLVR…LESC), 281 to 302 (QLEE…LLTM), 305 to 326 (KIHT…GPQQ), 329 to 350 (PTVT…IFSK), 353 to 374 (RLTK…MGSW), 376 to 397 (SITE…IEKL), 399 to 420 (NLEI…IGNL), 422 to 443 (KLRE…IGFL), 445 to 466 (HLTK…IGNL), 468 to 489 (SLQD…IGHL), 491 to 513 (SLKS…LALC), and 515 to 536 (SLEI…ITAG).

Belongs to the SHOC2 family. Interacts with let-60.

Its function is as follows. Acts as a Ras effector and participates in MAPK pathway activation. Probably acts as a scaffolding protein in a protein phosphatase complex that specifically dephosphorylates Raf kinase and stimulates Raf activity at specialized signaling complexes upon Ras activation. Required for vulval development. Involved in fluid homeostasis. Plays a role in nicotinic acetylcholine receptor (nAChR)-mediated sensitivity to nicotine. This chain is Leucine-rich repeat protein soc-2 (soc-2), found in Caenorhabditis briggsae.